Here is a 475-residue protein sequence, read N- to C-terminus: Ribulose bisphosphate carboxylase large chain (475 aa).

The propeptide occupies 1–2 (MS). Pro3 is subject to N-acetylproline. Position 14 is an N6,N6,N6-trimethyllysine (Lys14). Substrate is bound by residues Asn123 and Thr173. Lys175 functions as the Proton acceptor in the catalytic mechanism. Lys177 contacts substrate. Mg(2+) contacts are provided by Lys201, Asp203, and Glu204. Position 201 is an N6-carboxylysine (Lys201). Catalysis depends on His294, which acts as the Proton acceptor. Residues Arg295, His327, and Ser379 each coordinate substrate.

This sequence belongs to the RuBisCO large chain family. Type I subfamily. As to quaternary structure, heterohexadecamer of 8 large chains and 8 small chains. Mg(2+) serves as cofactor.

The protein localises to the plastid. The protein resides in the chloroplast. The catalysed reaction is 2 (2R)-3-phosphoglycerate + 2 H(+) = D-ribulose 1,5-bisphosphate + CO2 + H2O. The enzyme catalyses D-ribulose 1,5-bisphosphate + O2 = 2-phosphoglycolate + (2R)-3-phosphoglycerate + 2 H(+). Functionally, ruBisCO catalyzes two reactions: the carboxylation of D-ribulose 1,5-bisphosphate, the primary event in carbon dioxide fixation, as well as the oxidative fragmentation of the pentose substrate in the photorespiration process. Both reactions occur simultaneously and in competition at the same active site. The protein is Ribulose bisphosphate carboxylase large chain of Chlorella vulgaris (Green alga).